The following is a 264-amino-acid chain: MKQYLDLMRHVREHGTFKSDRTGTGTYSVFGHQMRFDLAAGFPLVTTKKCHLKSIVHELLWFLKGSTNIAYLKEHGVSIWDEWADENGDLGPVYGYQWRSWPAPDGRHIDQIANLMAMLKKNPDSRRLIVSAWNPALIDEMALPPCHALFQFYVADGKLSCQLYQRSADIFLGVPFNIASYALLTLMVAQVAGLQPGEFIWTGGDCHLYANHLEQADLQLTREPLPLPSMKLNPEVKDLFDFRFEDFELVGYEAHPHIKAPVAV.

R21 contributes to the dUMP binding site. H51 contributes to the (6R)-5,10-methylene-5,6,7,8-tetrahydrofolate binding site. Position 126-127 (126-127 (RR)) interacts with dUMP. The Nucleophile role is filled by C146. DUMP-binding positions include 166 to 169 (RSAD), N177, and 207 to 209 (HLY). Residue D169 participates in (6R)-5,10-methylene-5,6,7,8-tetrahydrofolate binding. A (6R)-5,10-methylene-5,6,7,8-tetrahydrofolate-binding site is contributed by A263.

The protein belongs to the thymidylate synthase family. Bacterial-type ThyA subfamily. Homodimer.

It localises to the cytoplasm. It catalyses the reaction dUMP + (6R)-5,10-methylene-5,6,7,8-tetrahydrofolate = 7,8-dihydrofolate + dTMP. Its pathway is pyrimidine metabolism; dTTP biosynthesis. Functionally, catalyzes the reductive methylation of 2'-deoxyuridine-5'-monophosphate (dUMP) to 2'-deoxythymidine-5'-monophosphate (dTMP) while utilizing 5,10-methylenetetrahydrofolate (mTHF) as the methyl donor and reductant in the reaction, yielding dihydrofolate (DHF) as a by-product. This enzymatic reaction provides an intracellular de novo source of dTMP, an essential precursor for DNA biosynthesis. The polypeptide is Thymidylate synthase (Pseudomonas aeruginosa (strain LESB58)).